A 458-amino-acid polypeptide reads, in one-letter code: MTFKKSFDCYDFYDRAKVGEKCTQDDWDLMKIPMKAMELKQKYGLDFKGEFVPTDRDMMEKLFQAGFEMLLECGIYCTDTHRIVKYTEDEIWDAINNVQKEFTLGTGRDAVNVRKRSVGDKRKPIVQGGPTGSPISEDVFMPVHMSYALEKEVDTIVNGVMTSVRGKPPVPKSPYEVLAAKTETRLIKQACAMAGRPGMAVOGPETSLSAQGNISADCAGGMQSTDSHEVSQLNELKIDLDAIAVIAHYNANSDIIMDEQMPIFGGYAGGIEETTIVDVATHINAFVMSNASWHLDGPVHIRWGSTNTRETLTIAGWACATISEFTDMLSGNQYYPCAGPGTEMCLLEASAQSITDTASGREILSGVASAKGVVTDKTTGMEARMMGEVARATAGAEITEINKILDKLVALYEKNYASAPAGKTFQECYDVKTVTPTEEYMQIYDGARKKLEELGLVF.

A non-standard amino acid (pyrrolysine) is located at residue O202.

The protein belongs to the monomethylamine methyltransferase family. Can form a complex with MtmC.

It catalyses the reaction Co(I)-[methylamine-specific corrinoid protein] + methylamine + H(+) = methyl-Co(III)-[methylamine-specific corrinoid protein] + NH4(+). It functions in the pathway one-carbon metabolism; methanogenesis from methylamine. Its function is as follows. Catalyzes the transfer of the methyl group from monomethylamine to the corrinoid cofactor of MtmC. The protein is Monomethylamine methyltransferase MtmB2 (mtmB2) of Methanosarcina acetivorans (strain ATCC 35395 / DSM 2834 / JCM 12185 / C2A).